The following is a 1014-amino-acid chain: MDAQIENAIEVAWNPSSSQELKGQAFEYLNQLRVDPQAWQVCIGLFTRSPPASEVVRLVSLEIINNAVHSEALDAASLVYLKQSLLEYIGRTYTSNTQSQVDPAHLQNKLTQTLTYLFVFLYREHWSSFVQDFYAIAQNDNLPGVILYLRILSSIHDEIADLMLSRQEQEAKRNSDLKDLIRERDMAKIATSWTDILSRYSNQHDGVVEMTLKIIGKWVSWIDISLVINQQMLGLLLPLVGRSNASGGEDKVRDIAVDTFTEIVSKKMKASDKIEMINFLQLREIITELLASPPLNEWKGTSQYDTDLAEVVAKLVNAIMSDIVRVLEDGKVDNDTRAKAEQLLQYFLPSLLRLFSDEYDEVCSTVIPSLTDLLTFLRKVRTLPATYAEMLPPILNAIVLKMRYDETSNWGLEDEQTDEAEFLELRKRLQILQKSVAAVDENLCMEFMSNLVGNMFSTLQQQGSQMDWRDLDLALHEMYLFGELALPNMGLAAKSQPNPVAAERLALMMSKMVDSGIANYAHPAILLQYMEICVRYHSFFESHQNYIPRVLENFVRLVHHEHVRVRTRSWYLFLRFVKTLRAQVGNVAKTVIESISDLLPIKAEVPSNDADDDMSSDESDHSADAVFNGQLYLFEAVGCVSATSATPVADQALYARSVMEPLFSDMSVHLERAKAGDAQAILQIHHIIMALGTLANGFADTPLGHTKARAQPAQEISAEFTRASEAILIALNQLNTSDEIRAACRSAFSRLLGVLGSAVLPQLPQWIEGLLSRSSSKDEMAMFLRLLEQIVYNFKGEISNILDLLLTPLLQRVFGGLSEPINGTDDEIQLQELRREYVSFVQVIFMNDLGGVLVSAANQGNFESLVSSIFSVAKNLNHGNLVASRIAFNVLSRMITQWGGPDIITPGENPVATGPPSPTIPGFEQFMLSQFHGVCWDVLQDGGFRPSSDATSRQILNEIAGIQQAIWMKTADLYINHVQNQLGQDSNDFLRTLTTTTARKPLVDWFLALLKGRK.

This sequence belongs to the exportin family.

It localises to the nucleus. Its subcellular location is the cytoplasm. Its function is as follows. tRNA nucleus export receptor which facilitates tRNA translocation across the nuclear pore complex. Involved in pre-tRNA splicing, probably by affecting the interaction of pre-tRNA with splicing endonuclease. The sequence is that of Exportin-T (LOS1) from Podospora anserina (strain S / ATCC MYA-4624 / DSM 980 / FGSC 10383) (Pleurage anserina).